The sequence spans 75 residues: UPF0346 protein OB1736 (75 aa).

It belongs to the UPF0346 family.

The protein is UPF0346 protein OB1736 of Oceanobacillus iheyensis (strain DSM 14371 / CIP 107618 / JCM 11309 / KCTC 3954 / HTE831).